A 250-amino-acid chain; its full sequence is Cyclin-Q (250 aa).

An N-acetylmethionine modification is found at Met1. The segment covering 1 to 10 (MEAVRPDSCE) has biased composition (basic and acidic residues). Residues 1 to 22 (MEAVRPDSCERGTAAARAEERP) form a disordered region.

The protein belongs to the cyclin family. Cyclin-like FAM58 subfamily. As to quaternary structure, associates with CDK10 to promote its kinase activity.

Its function is as follows. Activating cyclin for the cyclin-associated kinase CDK10. This Rattus norvegicus (Rat) protein is Cyclin-Q (Ccnq).